A 370-amino-acid polypeptide reads, in one-letter code: Anhydro-N-acetylmuramic acid kinase (370 aa).

Residue 13 to 20 (GTSMDGVD) participates in ATP binding.

The protein belongs to the anhydro-N-acetylmuramic acid kinase family.

The enzyme catalyses 1,6-anhydro-N-acetyl-beta-muramate + ATP + H2O = N-acetyl-D-muramate 6-phosphate + ADP + H(+). The protein operates within amino-sugar metabolism; 1,6-anhydro-N-acetylmuramate degradation. Its pathway is cell wall biogenesis; peptidoglycan recycling. In terms of biological role, catalyzes the specific phosphorylation of 1,6-anhydro-N-acetylmuramic acid (anhMurNAc) with the simultaneous cleavage of the 1,6-anhydro ring, generating MurNAc-6-P. Is required for the utilization of anhMurNAc either imported from the medium or derived from its own cell wall murein, and thus plays a role in cell wall recycling. The polypeptide is Anhydro-N-acetylmuramic acid kinase (Shewanella frigidimarina (strain NCIMB 400)).